A 210-amino-acid chain; its full sequence is ATP-dependent Clp protease proteolytic subunit (210 aa).

Ser-107 acts as the Nucleophile in catalysis. His-132 is a catalytic residue.

It belongs to the peptidase S14 family. Fourteen ClpP subunits assemble into 2 heptameric rings which stack back to back to give a disk-like structure with a central cavity, resembling the structure of eukaryotic proteasomes.

It is found in the cytoplasm. It carries out the reaction Hydrolysis of proteins to small peptides in the presence of ATP and magnesium. alpha-casein is the usual test substrate. In the absence of ATP, only oligopeptides shorter than five residues are hydrolyzed (such as succinyl-Leu-Tyr-|-NHMec, and Leu-Tyr-Leu-|-Tyr-Trp, in which cleavage of the -Tyr-|-Leu- and -Tyr-|-Trp bonds also occurs).. Cleaves peptides in various proteins in a process that requires ATP hydrolysis. Has a chymotrypsin-like activity. Plays a major role in the degradation of misfolded proteins. The sequence is that of ATP-dependent Clp protease proteolytic subunit from Chromobacterium violaceum (strain ATCC 12472 / DSM 30191 / JCM 1249 / CCUG 213 / NBRC 12614 / NCIMB 9131 / NCTC 9757 / MK).